The primary structure comprises 122 residues: NADH-quinone oxidoreductase subunit A (122 aa).

Transmembrane regions (helical) follow at residues 10 to 30 (MIVG…LTLG), 66 to 86 (IFAL…PWAV), and 91 to 111 (LGLF…IGLA).

This sequence belongs to the complex I subunit 3 family. As to quaternary structure, NDH-1 is composed of 14 different subunits. Subunits NuoA, H, J, K, L, M, N constitute the membrane sector of the complex.

The protein localises to the cell membrane. It carries out the reaction a quinone + NADH + 5 H(+)(in) = a quinol + NAD(+) + 4 H(+)(out). In terms of biological role, NDH-1 shuttles electrons from NADH, via FMN and iron-sulfur (Fe-S) centers, to quinones in the respiratory chain. The immediate electron acceptor for the enzyme in this species is believed to be a menaquinone. Couples the redox reaction to proton translocation (for every two electrons transferred, four hydrogen ions are translocated across the cytoplasmic membrane), and thus conserves the redox energy in a proton gradient. The protein is NADH-quinone oxidoreductase subunit A of Bacillus cytotoxicus (strain DSM 22905 / CIP 110041 / 391-98 / NVH 391-98).